We begin with the raw amino-acid sequence, 76 residues long: Translational regulator CsrA (76 aa).

It belongs to the CsrA/RsmA family. In terms of assembly, homodimer; the beta-strands of each monomer intercalate to form a hydrophobic core, while the alpha-helices form wings that extend away from the core.

It localises to the cytoplasm. In terms of biological role, a translational regulator that binds mRNA to regulate translation initiation and/or mRNA stability. Usually binds in the 5'-UTR at or near the Shine-Dalgarno sequence preventing ribosome-binding, thus repressing translation. Its main target seems to be the major flagellin gene, while its function is anatagonized by FliW. In Syntrophomonas wolfei subsp. wolfei (strain DSM 2245B / Goettingen), this protein is Translational regulator CsrA.